Consider the following 611-residue polypeptide: Protein PES4 (611 aa).

The interval 37 to 81 (FNPVVTPIRPDDYHEKTSRSSSSSHSDSPEFLRINNNKSGHKNGK) is disordered. Over residues 45-54 (RPDDYHEKTS) the composition is skewed to basic and acidic residues. RRM domains lie at 91-169 (VPLF…PSLR), 179-247 (TNVF…GKKI), 303-379 (NSIF…RAQD), and 393-471 (STLF…WERQ).

The protein localises to the nucleus. The protein is Protein PES4 (PES4) of Saccharomyces cerevisiae (strain ATCC 204508 / S288c) (Baker's yeast).